A 238-amino-acid polypeptide reads, in one-letter code: Pyridoxine 5'-phosphate synthase (238 aa).

N9 serves as a coordination point for 3-amino-2-oxopropyl phosphate. D11–H12 contacts 1-deoxy-D-xylulose 5-phosphate. R20 is a binding site for 3-amino-2-oxopropyl phosphate. The active-site Proton acceptor is H45. Positions 47 and 52 each coordinate 1-deoxy-D-xylulose 5-phosphate. The Proton acceptor role is filled by E72. T102 contacts 1-deoxy-D-xylulose 5-phosphate. Catalysis depends on H189, which acts as the Proton donor. 3-amino-2-oxopropyl phosphate-binding positions include G190 and G211–H212.

It belongs to the PNP synthase family. In terms of assembly, homooctamer; tetramer of dimers.

It is found in the cytoplasm. The enzyme catalyses 3-amino-2-oxopropyl phosphate + 1-deoxy-D-xylulose 5-phosphate = pyridoxine 5'-phosphate + phosphate + 2 H2O + H(+). Its pathway is cofactor biosynthesis; pyridoxine 5'-phosphate biosynthesis; pyridoxine 5'-phosphate from D-erythrose 4-phosphate: step 5/5. Catalyzes the complicated ring closure reaction between the two acyclic compounds 1-deoxy-D-xylulose-5-phosphate (DXP) and 3-amino-2-oxopropyl phosphate (1-amino-acetone-3-phosphate or AAP) to form pyridoxine 5'-phosphate (PNP) and inorganic phosphate. The polypeptide is Pyridoxine 5'-phosphate synthase (Ehrlichia canis (strain Jake)).